Here is a 692-residue protein sequence, read N- to C-terminus: Ena/VASP-like protein (692 aa).

Residues 1–112 (MSEQSICQAR…NAMLFALNIM (112 aa)) form the WH1 domain. 3 disordered regions span residues 116–310 (DGGP…VQKN), 466–518 (SAAM…YEES), and 531–650 (KLRK…NDVS). 2 stretches are compositionally biased toward polar residues: residues 123–132 (RQAQNIQNGP) and 159–169 (STTVSTLQINV). Over residues 214–226 (SSKSTNKSSNRTS) the composition is skewed to low complexity. Polar residues predominate over residues 231–267 (LQNSHCGSEPSTSQSSAFSPIRPSNGTVSRSIKQISL). Composition is skewed to low complexity over residues 288 to 310 (PSLS…VQKN) and 466 to 479 (SAAM…APAP). Pro residues predominate over residues 480-506 (ASGPPPPPPPGPPPPSGGTPPPAPPLP). Residues 522–542 (GLAAALAGAKLRKVQRPEDGS) form an EVH2 block A region. An EVH2 region spans residues 522 to 689 (GLAAALAGAK…DAIRQELSRI (168 aa)). A KLKR motif is present at residues 531 to 534 (KLRK). Positions 563–580 (GGLMEEMNKLLAKRRKAA) are EVH2 block B. The span at 597–617 (EDASLSSSPVTRGPTPQNSSD) shows a compositional bias: polar residues. Positions 618-628 (LGKKPWERSNS) are enriched in basic and acidic residues. An EVH2 block C region spans residues 655 to 689 (DFDRMKQEILEEVVRELHKVKEEIIDAIRQELSRI).

The protein belongs to the Ena/VASP family. In terms of tissue distribution, during embryonic and tadpole development, expressed in the cement gland, brain, neural tube, myotome and neural placodes, including the otic, lateral line and olfactory placodes. All isoforms show similar spatial expression patterns.

It is found in the cytoplasm. Its subcellular location is the cytoskeleton. It localises to the stress fiber. The protein localises to the cell projection. The protein resides in the lamellipodium. In terms of biological role, ena/VASP proteins are actin-associated proteins involved in a range of processes dependent on cytoskeleton remodeling and cell polarity such as axon guidance and lamellipodial and filopodial dynamics in migrating cells. Evl enhances actin nucleation and polymerization. In Xenopus laevis (African clawed frog), this protein is Ena/VASP-like protein.